The chain runs to 64 residues: Large ribosomal subunit protein uL29 (64 aa).

The protein belongs to the universal ribosomal protein uL29 family.

This Ligilactobacillus salivarius (strain UCC118) (Lactobacillus salivarius) protein is Large ribosomal subunit protein uL29.